Consider the following 220-residue polypeptide: Fructose-6-phosphate aldolase (220 aa).

The active-site Schiff-base intermediate with substrate is K85.

Belongs to the transaldolase family. Type 3A subfamily. Homodecamer.

The protein localises to the cytoplasm. The enzyme catalyses beta-D-fructose 6-phosphate = dihydroxyacetone + D-glyceraldehyde 3-phosphate. Functionally, catalyzes the reversible formation of fructose 6-phosphate from dihydroxyacetone and D-glyceraldehyde 3-phosphate via an aldolization reaction. This is Fructose-6-phosphate aldolase from Salmonella agona (strain SL483).